Consider the following 207-residue polypeptide: Uridine kinase (207 aa).

ATP is bound at residue 14 to 21 (GGSGSGKT).

The protein belongs to the uridine kinase family.

It localises to the cytoplasm. It carries out the reaction uridine + ATP = UMP + ADP + H(+). It catalyses the reaction cytidine + ATP = CMP + ADP + H(+). Its pathway is pyrimidine metabolism; CTP biosynthesis via salvage pathway; CTP from cytidine: step 1/3. It participates in pyrimidine metabolism; UMP biosynthesis via salvage pathway; UMP from uridine: step 1/1. In Deinococcus deserti (strain DSM 17065 / CIP 109153 / LMG 22923 / VCD115), this protein is Uridine kinase.